The chain runs to 181 residues: Protein Syd (181 aa).

It belongs to the Syd family.

The protein localises to the cell inner membrane. Its function is as follows. Interacts with the SecY protein in vivo. May bind preferentially to an uncomplexed state of SecY, thus functioning either as a chelating agent for excess SecY in the cell or as a regulatory factor that negatively controls the translocase function. This chain is Protein Syd, found in Enterobacter sp. (strain 638).